The primary structure comprises 219 residues: MSTSTHALTLQNPIQAPQVTKELSENVILTCLDDIYNWARLSTLYPMMFGTACCFMEFMAAFGPRFDLERFGSIPRATPRQADLMITAGTITMKYAPALVQLYEQIPEPKYVIAMGACTITAGMFSADSPTAVRGVDKLIPVDVYIPGCPPRPEAVIDGIIKLRKKVAGESRQDYTEDLQTHRFHAVRHRMKPVSPILTGQYLRHHEDLTPHHDPLLIK.

[4Fe-4S] cluster contacts are provided by C53, C54, C118, and C149.

It belongs to the complex I 20 kDa subunit family. As to quaternary structure, NDH-1 can be composed of about 15 different subunits; different subcomplexes with different compositions have been identified which probably have different functions. It depends on [4Fe-4S] cluster as a cofactor.

It localises to the cellular thylakoid membrane. It catalyses the reaction a plastoquinone + NADH + (n+1) H(+)(in) = a plastoquinol + NAD(+) + n H(+)(out). It carries out the reaction a plastoquinone + NADPH + (n+1) H(+)(in) = a plastoquinol + NADP(+) + n H(+)(out). NDH-1 shuttles electrons from an unknown electron donor, via FMN and iron-sulfur (Fe-S) centers, to quinones in the respiratory and/or the photosynthetic chain. The immediate electron acceptor for the enzyme in this species is believed to be plastoquinone. Couples the redox reaction to proton translocation, and thus conserves the redox energy in a proton gradient. Cyanobacterial NDH-1 also plays a role in inorganic carbon-concentration. The polypeptide is NAD(P)H-quinone oxidoreductase subunit K 2 (Synechocystis sp. (strain ATCC 27184 / PCC 6803 / Kazusa)).